A 374-amino-acid chain; its full sequence is uncharacterized protein (374 aa).

This sequence belongs to the mimivirus R640 family.

It localises to the virion. This is an uncharacterized protein from Acanthamoeba polyphaga (Amoeba).